The chain runs to 408 residues: Peptidase T (408 aa).

Residue histidine 78 participates in Zn(2+) binding. Aspartate 80 is an active-site residue. Aspartate 141 is a binding site for Zn(2+). Glutamate 175 acts as the Proton acceptor in catalysis. Zn(2+)-binding residues include glutamate 176, aspartate 198, and histidine 380.

Belongs to the peptidase M20B family. It depends on Zn(2+) as a cofactor.

The protein resides in the cytoplasm. It carries out the reaction Release of the N-terminal residue from a tripeptide.. In terms of biological role, cleaves the N-terminal amino acid of tripeptides. The protein is Peptidase T of Clostridium botulinum (strain 657 / Type Ba4).